The primary structure comprises 1011 residues: MVKKKTNNDKGKEVKENEGKLDIDSESSPHERENDKKKTEDDSLRATESEETNTHNANPNETVRADKFSQEESRPIEDSPHTDKNTAQESCQPSSAEDNVINTDITSLNEKTSTNDEQEKGLPLKISEGPFTISTLLDNVPSDLIYTCCEAYENHIFLGTTTGDLLHYFELERGNYMLVSQTKFDAESNSKIDKILLLPKVEGALILCDNELVLFILPEFAPRPNTTRLKGISDVVICNFSRSSKAYRIYAFHAEGVRLLKISADSLVLTKAFNFKLIDKACAHEETLMVSKLNSYELINLKSSQVIPLFRISETDEDLEPIITSFNEQSEFLVCSGGGSYDSGAMALVVNHHGDIIKGTIVLKNYPRNVIVEFPYIIAESAFQSVDIYSALPSEKSQLLQSITTSGSDLKISKSDNVFTNTNNSEEFKEKIFNKLRLEPLTHSDNKFRIERERAFVEESYEEKTSLIVYNNLGIHLLVPTPMVLRFTSCEESEIDNIEDQLKKLAKKDLTKFEHIEAKYLMSLLLFLMTLHYDHIEDEVMKKWCDFSDKVDIRILFYMFGWKVYSEIWCFHGLINIVERLKSLKLTNKCENILKMLLMMKNELKKKNKTGLLTNDFDDIMKTIDITLFKLRLEKKETITVDMFERESYDEIIREINLHDDKLPRIELLIEIYKEKGEYLKALNLLREAGDYISLVSFIEENLKKLPEDYIKERIADDLLLTLKQGDENTEECAIKKVLKILDMACINKNDFLNKIPAEETSLKVSFIEQLGVQNSNDSKFLFNYYLAKLREIINQSNIWSILGDFIKEYKDDFAYDKTDITNFIHIKLKHSLQCENFSKYYEKCENLKSENEKDDEFINFTFDEISKIDKEHILTLLFFPNELTNWVSSEELLKIYLSFNDFRSVEKYIGKQNLVAVMKQYLDISSLNYSVELVTNLLQRNFELLDDTDIQLKILETIPSVFPVQTISELLLKVLIKYQEKKEESNLRKCLLKNQISISDELSRNFDSQG.

Composition is skewed to basic and acidic residues over residues 1–48 and 63–86; these read MVKK…RATE and VRADKFSQEESRPIEDSPHTDKNT. Residues 1-100 are disordered; that stretch reads MVKKKTNNDK…CQPSSAEDNV (100 aa). A compositionally biased stretch (polar residues) spans 87 to 100; that stretch reads AQESCQPSSAEDNV. The CNH domain occupies 143–418; it reads DLIYTCCEAY…DLKISKSDNV (276 aa).

This sequence belongs to the VPS3 family.

The protein resides in the cytoplasm. In terms of biological role, required for sorting and processing of soluble vacuolar proteins, integrity of vacuolar morphology, efficient segregation of vacuolar material into the bud during the cell cycle, acidification of the vacuolar lumen, and assembly of the vacuolar H(+)-ATPase. This is Vacuolar protein sorting-associated protein 3 (VPS3) from Saccharomyces cerevisiae (strain ATCC 204508 / S288c) (Baker's yeast).